The sequence spans 438 residues: Na(+)/H(+) antiporter NhaA (438 aa).

11 helical membrane-spanning segments follow: residues 23–43 (FGGI…NSFL), 62–82 (FFIG…LFFL), 104–124 (SFPV…YFFL), 133–153 (GFGI…MLLG), 162–182 (VFLI…IALF), 185–205 (TNLK…LAVL), 212–232 (SLIP…QSGI), 302–322 (FLAP…NAGV), 337–357 (LGVI…ITFI), 372–392 (WWHI…SMFI), and 410–430 (IAIL…LFVL).

It belongs to the NhaA Na(+)/H(+) (TC 2.A.33) antiporter family.

The protein resides in the cell inner membrane. The enzyme catalyses Na(+)(in) + 2 H(+)(out) = Na(+)(out) + 2 H(+)(in). Its function is as follows. Na(+)/H(+) antiporter that extrudes sodium in exchange for external protons. The polypeptide is Na(+)/H(+) antiporter NhaA (Helicobacter pylori (strain G27)).